A 303-amino-acid polypeptide reads, in one-letter code: MEIVELKDDNQEYFLDALLGKEIEKTDFSITEKENFKQNKFKELRNVFSRDNILKFGLMTGEVQIPIEQTDGSVFLATINKEQITKRISKIEEKQRRLIRYVHISTLQVLIKSTFLKGLDTPLELTLRDNRLLNLEESKIAVGHGNLKYGKMKFDVNLQLGLSLKDLDLDRSIILNYKFLRRNFMKEGNHAFSISYRINYALSNSHHSVEFKQKEKIYIDELFSEVLELKHPVFSKLTKSQSLRIEPSPVFEKPLISFKENQKTEEKTVFKPPKRDFELTETSKLKSMISDLTQKVVNLDKKI.

A coiled-coil region spans residues 272 to 302 (PPKRDFELTETSKLKSMISDLTQKVVNLDKK).

Belongs to the caulimoviridae movement protein family. Homotrimer, through the coiled-coil domain. Interacts with VAP.

The protein resides in the host cell junction. It is found in the host plasmodesma. Transports viral genome to neighboring plant cells directly through plasmosdesmata, without any budding. The movement protein allows efficient cell to cell propagation, by bypassing the host cell wall barrier. Acts by forming tubules structures that increase the size exclusion limit (SEL) of plasmodesmata, thereby allowing viral ribonucleocapsids to spread directly to neighboring cells. The chain is Movement protein from Soybean chlorotic mottle virus.